The sequence spans 335 residues: Fructose-1,6-bisphosphatase class 1 (335 aa).

Mg(2+) is bound by residues Glu89, Asp112, Leu114, and Asp115. Residues 115–118, Asn208, Tyr241, and Lys271 contribute to the substrate site; that span reads DGSS. Position 277 (Glu277) interacts with Mg(2+).

The protein belongs to the FBPase class 1 family. Homotetramer. Mg(2+) is required as a cofactor.

The protein resides in the cytoplasm. It carries out the reaction beta-D-fructose 1,6-bisphosphate + H2O = beta-D-fructose 6-phosphate + phosphate. Its pathway is carbohydrate biosynthesis; gluconeogenesis. This chain is Fructose-1,6-bisphosphatase class 1, found in Proteus mirabilis (strain HI4320).